A 764-amino-acid polypeptide reads, in one-letter code: 5-methyltetrahydropteroyltriglutamate--homocysteine methyltransferase (764 aa).

Residues 19–22 (RELK) and Lys113 contribute to the 5-methyltetrahydropteroyltri-L-glutamate site. L-homocysteine-binding positions include 435–437 (IGS) and Glu488. Residues 435 to 437 (IGS) and Glu488 each bind L-methionine. Residues 519-520 (RC) and Trp565 contribute to the 5-methyltetrahydropteroyltri-L-glutamate site. Asp603 is a binding site for L-homocysteine. An L-methionine-binding site is contributed by Asp603. Residue Glu609 coordinates 5-methyltetrahydropteroyltri-L-glutamate. Zn(2+)-binding residues include His645, Cys647, and Glu669. His698 acts as the Proton donor in catalysis. Cys730 lines the Zn(2+) pocket.

Belongs to the vitamin-B12 independent methionine synthase family. Zn(2+) is required as a cofactor.

The catalysed reaction is 5-methyltetrahydropteroyltri-L-glutamate + L-homocysteine = tetrahydropteroyltri-L-glutamate + L-methionine. The protein operates within amino-acid biosynthesis; L-methionine biosynthesis via de novo pathway; L-methionine from L-homocysteine (MetE route): step 1/1. Catalyzes the transfer of a methyl group from 5-methyltetrahydrofolate to homocysteine resulting in methionine formation. The polypeptide is 5-methyltetrahydropteroyltriglutamate--homocysteine methyltransferase (Desulforamulus reducens (strain ATCC BAA-1160 / DSM 100696 / MI-1) (Desulfotomaculum reducens)).